The following is a 744-amino-acid chain: Phosphoribosylformylglycinamidine synthase subunit PurL (744 aa).

The active site involves H50. The ATP site is built by Y53 and K92. E94 contacts Mg(2+). Residues 95 to 98 (SHNH) and R117 each bind substrate. Catalysis depends on H96, which acts as the Proton acceptor. Mg(2+) is bound at residue D118. Q241 serves as a coordination point for substrate. D269 contacts Mg(2+). 313–315 (ESQ) lines the substrate pocket. Residues D495 and G532 each coordinate ATP. N533 is a binding site for Mg(2+). Substrate is bound at residue S535.

It belongs to the FGAMS family. As to quaternary structure, monomer. Part of the FGAM synthase complex composed of 1 PurL, 1 PurQ and 2 PurS subunits.

It localises to the cytoplasm. The enzyme catalyses N(2)-formyl-N(1)-(5-phospho-beta-D-ribosyl)glycinamide + L-glutamine + ATP + H2O = 2-formamido-N(1)-(5-O-phospho-beta-D-ribosyl)acetamidine + L-glutamate + ADP + phosphate + H(+). The protein operates within purine metabolism; IMP biosynthesis via de novo pathway; 5-amino-1-(5-phospho-D-ribosyl)imidazole from N(2)-formyl-N(1)-(5-phospho-D-ribosyl)glycinamide: step 1/2. Its function is as follows. Part of the phosphoribosylformylglycinamidine synthase complex involved in the purines biosynthetic pathway. Catalyzes the ATP-dependent conversion of formylglycinamide ribonucleotide (FGAR) and glutamine to yield formylglycinamidine ribonucleotide (FGAM) and glutamate. The FGAM synthase complex is composed of three subunits. PurQ produces an ammonia molecule by converting glutamine to glutamate. PurL transfers the ammonia molecule to FGAR to form FGAM in an ATP-dependent manner. PurS interacts with PurQ and PurL and is thought to assist in the transfer of the ammonia molecule from PurQ to PurL. The polypeptide is Phosphoribosylformylglycinamidine synthase subunit PurL (Rhizobium johnstonii (strain DSM 114642 / LMG 32736 / 3841) (Rhizobium leguminosarum bv. viciae)).